Reading from the N-terminus, the 275-residue chain is NH(3)-dependent NAD(+) synthetase (275 aa).

46–53 lines the ATP pocket; the sequence is GISGGQDS. Asp52 serves as a coordination point for Mg(2+). Position 140 (Arg140) interacts with deamido-NAD(+). Thr160 contributes to the ATP binding site. Glu165 is a Mg(2+) binding site. Deamido-NAD(+) contacts are provided by Lys173 and Asp180. Residues Lys189 and Thr211 each contribute to the ATP site. Residue 260–261 coordinates deamido-NAD(+); it reads HK.

Belongs to the NAD synthetase family. Homodimer.

The catalysed reaction is deamido-NAD(+) + NH4(+) + ATP = AMP + diphosphate + NAD(+) + H(+). It functions in the pathway cofactor biosynthesis; NAD(+) biosynthesis; NAD(+) from deamido-NAD(+) (ammonia route): step 1/1. Its function is as follows. Catalyzes the ATP-dependent amidation of deamido-NAD to form NAD. Uses ammonia as a nitrogen source. In Escherichia coli O139:H28 (strain E24377A / ETEC), this protein is NH(3)-dependent NAD(+) synthetase.